The sequence spans 393 residues: uncharacterized protein (393 aa).

The OBG-type G domain occupies 2–266; the sequence is AMIGLVGKPN…AEKAGIIKRK (265 aa). Residues 8-15 and 78-82 contribute to the GTP site; these read GKPNVGKS and DVAGL. Residues 314-390 enclose the TGS domain; sequence DMIVVYPVED…KHNDIIKIVS (77 aa).

It belongs to the TRAFAC class OBG-HflX-like GTPase superfamily. OBG GTPase family.

This is an uncharacterized protein from Methanocaldococcus jannaschii (strain ATCC 43067 / DSM 2661 / JAL-1 / JCM 10045 / NBRC 100440) (Methanococcus jannaschii).